The chain runs to 445 residues: Gasdermin-A (445 aa).

The segment at 1–251 (MTMFENVTRA…VILIQASDVG (251 aa)) is triggers pyroptosis. A cardiolipin is bound at residue 9–13 (RALAR). Beta stranded transmembrane passes span 78 to 95 (NFGFKNMLDTRVEGDVDV), 99 to 120 (VKVKGTAGLSQNSTLEVQTLSV), 163 to 179 (VTLERAGKAEACFSLPF), and 183 to 197 (LGLQGSINHKEAVTI).

It belongs to the gasdermin family. As to quaternary structure, homooligomer; homooligomeric ring-shaped pore complex containing 18-36 subunits when inserted in the membrane. Cleavage by S.pyogenes SpeB relieves autoinhibition by releasing the N-terminal moiety (Gasdermin-A, N-terminal) that initiates pyroptosis. In terms of processing, palmitoylated. As to expression, expressed predominantly in the gastrointestinal tract and, at a lower level, in the skin. Also detected in mammary gland. In the gastrointestinal tract, mainly expressed in differentiated cells, including the differentiated cell layer of esophagus and mucus-secreting pit cells of the gastric epithelium. Down-regulated in gastric cancer cells.

The protein resides in the cytoplasm. It is found in the perinuclear region. It localises to the cytosol. The protein localises to the cell membrane. Its activity is regulated as follows. The full-length protein before cleavage is inactive: intramolecular interactions between N- and C-terminal domains mediate autoinhibition in the absence of activation signal. The intrinsic pyroptosis-inducing activity is carried by the released N-terminal moiety (Gasdermin-A, N-terminal) following cleavage by S.pyogenes effector protein SpeB. This form constitutes the precursor of the pore-forming protein and acts as a sensor of infection: upon infection by S.pyogenes, specifically cleaved by S.pyogenes effector protein SpeB in epithelial cells, releasing the N-terminal moiety (Gasdermin-A, N-terminal) that binds to membranes and forms pores, triggering pyroptosis. In terms of biological role, pore-forming protein that causes membrane permeabilization and pyroptosis. Released upon cleavage by S.pyogenes effector protein SpeB, and binds to membrane inner leaflet lipids. Homooligomerizes within the membrane and forms pores of 10-15 nanometers (nm) of inner diameter, triggering pyroptosis. Pyroptosis triggers the elimination of the infected skin cell, depriving the pathogen of its protective niche, while inducing an inflammatory response. This ultimately prevents bacterial penetration of the epithelial barrier and a subsequent systemic dissemination of the pathogen. Binds to cardiolipin and other acidic phospholipids, such as phosphatidylserine, which mediate its targeting to the inner leaflet membrane. The chain is Gasdermin-A from Homo sapiens (Human).